A 384-amino-acid polypeptide reads, in one-letter code: Zinc metalloproteinase nas-12 (384 aa).

The first 25 residues, 1–25 (MLYIPQFSIYFCLGYLLLFCKISNA), serve as a signal peptide directing secretion. Residues 73 to 271 (VSIKGSSMNR…EKLNRLGQCG (199 aa)) enclose the Peptidase M12A domain. Disulfide bonds link C116/C270, C137/C156, C287/C325, C296/C318, and C305/C322. Residue H164 coordinates Zn(2+). E165 is a catalytic residue. H168 and H174 together coordinate Zn(2+). One can recognise a ShKT 1 domain in the interval 287 to 325 (CQDVATAVSCEGNRRRGMCKNPFYKQMMIKSCQKTCRLC). N-linked (GlcNAc...) asparagine glycosylation is present at N340. Cystine bridges form between C348/C384, C355/C377, and C364/C381. The 37-residue stretch at 348–384 (CEDKHPRCDIYSHNGFCTLPFYDDVRYQLCAKTCNLC) folds into the ShKT 2 domain.

It depends on Zn(2+) as a cofactor. As to expression, expressed in pharyngeal glands.

It localises to the secreted. Its function is as follows. Metalloprotease. This chain is Zinc metalloproteinase nas-12 (nas-12), found in Caenorhabditis elegans.